The following is a 210-amino-acid chain: Transcriptional regulator DauR (210 aa).

This sequence belongs to the DauR family.

In terms of biological role, dauR represses the dauBAR operon. In Pseudomonas aeruginosa (strain ATCC 15692 / DSM 22644 / CIP 104116 / JCM 14847 / LMG 12228 / 1C / PRS 101 / PAO1), this protein is Transcriptional regulator DauR.